Reading from the N-terminus, the 225-residue chain is NAD(P)H-quinone oxidoreductase subunit K, chloroplastic (225 aa).

Positions 43, 44, 108, and 139 each coordinate [4Fe-4S] cluster.

It belongs to the complex I 20 kDa subunit family. As to quaternary structure, NDH is composed of at least 16 different subunits, 5 of which are encoded in the nucleus. [4Fe-4S] cluster is required as a cofactor.

It is found in the plastid. The protein resides in the chloroplast thylakoid membrane. The catalysed reaction is a plastoquinone + NADH + (n+1) H(+)(in) = a plastoquinol + NAD(+) + n H(+)(out). It carries out the reaction a plastoquinone + NADPH + (n+1) H(+)(in) = a plastoquinol + NADP(+) + n H(+)(out). NDH shuttles electrons from NAD(P)H:plastoquinone, via FMN and iron-sulfur (Fe-S) centers, to quinones in the photosynthetic chain and possibly in a chloroplast respiratory chain. The immediate electron acceptor for the enzyme in this species is believed to be plastoquinone. Couples the redox reaction to proton translocation, and thus conserves the redox energy in a proton gradient. In Daucus carota (Wild carrot), this protein is NAD(P)H-quinone oxidoreductase subunit K, chloroplastic.